A 189-amino-acid chain; its full sequence is Peptidyl-tRNA hydrolase (189 aa).

Tyr15 contacts tRNA. The Proton acceptor role is filled by His20. Residues Phe66, Asn68, and Asn114 each contribute to the tRNA site.

It belongs to the PTH family. In terms of assembly, monomer.

The protein resides in the cytoplasm. It catalyses the reaction an N-acyl-L-alpha-aminoacyl-tRNA + H2O = an N-acyl-L-amino acid + a tRNA + H(+). Functionally, hydrolyzes ribosome-free peptidyl-tRNAs (with 1 or more amino acids incorporated), which drop off the ribosome during protein synthesis, or as a result of ribosome stalling. Catalyzes the release of premature peptidyl moieties from peptidyl-tRNA molecules trapped in stalled 50S ribosomal subunits, and thus maintains levels of free tRNAs and 50S ribosomes. The chain is Peptidyl-tRNA hydrolase from Streptococcus gordonii (strain Challis / ATCC 35105 / BCRC 15272 / CH1 / DL1 / V288).